The chain runs to 932 residues: Isoleucine--tRNA ligase (932 aa).

Residues 59 to 69 carry the 'HIGH' region motif; the sequence is PYANGTIHIGH. E562 serves as a coordination point for L-isoleucyl-5'-AMP. The 'KMSKS' region motif lies at 603–607; it reads KMSKS. K606 serves as a coordination point for ATP. Residues C899, C902, C915, and C918 each contribute to the Zn(2+) site.

Belongs to the class-I aminoacyl-tRNA synthetase family. IleS type 1 subfamily. In terms of assembly, monomer. Requires Zn(2+) as cofactor.

Its subcellular location is the cytoplasm. It carries out the reaction tRNA(Ile) + L-isoleucine + ATP = L-isoleucyl-tRNA(Ile) + AMP + diphosphate. Catalyzes the attachment of isoleucine to tRNA(Ile). As IleRS can inadvertently accommodate and process structurally similar amino acids such as valine, to avoid such errors it has two additional distinct tRNA(Ile)-dependent editing activities. One activity is designated as 'pretransfer' editing and involves the hydrolysis of activated Val-AMP. The other activity is designated 'posttransfer' editing and involves deacylation of mischarged Val-tRNA(Ile). In Pasteurella multocida (strain Pm70), this protein is Isoleucine--tRNA ligase.